We begin with the raw amino-acid sequence, 363 residues long: Ferrochelatase (363 aa).

2 residues coordinate Fe cation: histidine 209 and glutamate 290.

It belongs to the ferrochelatase family.

The protein resides in the cytoplasm. The enzyme catalyses heme b + 2 H(+) = protoporphyrin IX + Fe(2+). It participates in porphyrin-containing compound metabolism; protoheme biosynthesis; protoheme from protoporphyrin-IX: step 1/1. Catalyzes the ferrous insertion into protoporphyrin IX. This chain is Ferrochelatase, found in Azoarcus sp. (strain BH72).